The following is a 122-amino-acid chain: Large ribosomal subunit protein uL14 (122 aa).

Belongs to the universal ribosomal protein uL14 family. In terms of assembly, part of the 50S ribosomal subunit. Forms a cluster with proteins L3 and L19. In the 70S ribosome, L14 and L19 interact and together make contacts with the 16S rRNA in bridges B5 and B8.

Binds to 23S rRNA. Forms part of two intersubunit bridges in the 70S ribosome. The chain is Large ribosomal subunit protein uL14 from Trichlorobacter lovleyi (strain ATCC BAA-1151 / DSM 17278 / SZ) (Geobacter lovleyi).